A 287-amino-acid chain; its full sequence is Bifunctional protein FolD (287 aa).

NADP(+) is bound by residues glycine 165–glycine 167, threonine 190, and isoleucine 231.

The protein belongs to the tetrahydrofolate dehydrogenase/cyclohydrolase family. As to quaternary structure, homodimer.

It catalyses the reaction (6R)-5,10-methylene-5,6,7,8-tetrahydrofolate + NADP(+) = (6R)-5,10-methenyltetrahydrofolate + NADPH. The catalysed reaction is (6R)-5,10-methenyltetrahydrofolate + H2O = (6R)-10-formyltetrahydrofolate + H(+). It functions in the pathway one-carbon metabolism; tetrahydrofolate interconversion. In terms of biological role, catalyzes the oxidation of 5,10-methylenetetrahydrofolate to 5,10-methenyltetrahydrofolate and then the hydrolysis of 5,10-methenyltetrahydrofolate to 10-formyltetrahydrofolate. The polypeptide is Bifunctional protein FolD (Heliobacterium modesticaldum (strain ATCC 51547 / Ice1)).